The following is a 128-amino-acid chain: EPIDERMAL PATTERNING FACTOR-like protein 2 (128 aa).

The signal sequence occupies residues 1–28; that stretch reads MVWSSNMSSFLLILLILNSTHFSLMANG. 3 cysteine pairs are disulfide-bonded: cysteine 60–cysteine 119, cysteine 65–cysteine 71, and cysteine 68–cysteine 121. The span at 79–90 shows a compositional bias: polar residues; that stretch reads NPQTKLHSPLTT. The tract at residues 79–100 is disordered; the sequence is NPQTKLHSPLTTSSSSSSETIH.

This sequence belongs to the plant cysteine rich small secretory peptide family. Epidermal patterning factor subfamily.

It localises to the secreted. Its function is as follows. Controls stomatal patterning. In Arabidopsis thaliana (Mouse-ear cress), this protein is EPIDERMAL PATTERNING FACTOR-like protein 2.